The following is a 130-amino-acid chain: ATP synthase epsilon chain, chloroplastic (130 aa).

The protein belongs to the ATPase epsilon chain family. In terms of assembly, F-type ATPases have 2 components, CF(1) - the catalytic core - and CF(0) - the membrane proton channel. CF(1) has five subunits: alpha(3), beta(3), gamma(1), delta(1), epsilon(1). CF(0) has three main subunits: a, b and c.

It is found in the plastid. The protein localises to the chloroplast thylakoid membrane. Functionally, produces ATP from ADP in the presence of a proton gradient across the membrane. In Tupiella akineta (Green alga), this protein is ATP synthase epsilon chain, chloroplastic.